The primary structure comprises 530 residues: Glutamate--cysteine ligase (530 aa).

The protein belongs to the glutamate--cysteine ligase type 1 family. Type 1 subfamily.

The catalysed reaction is L-cysteine + L-glutamate + ATP = gamma-L-glutamyl-L-cysteine + ADP + phosphate + H(+). The protein operates within sulfur metabolism; glutathione biosynthesis; glutathione from L-cysteine and L-glutamate: step 1/2. The sequence is that of Glutamate--cysteine ligase from Saccharophagus degradans (strain 2-40 / ATCC 43961 / DSM 17024).